Reading from the N-terminus, the 464-residue chain is MSKKIASARISEKSSKLLQDLNNSLPFDKVLYREDIEGSRAHAFMLSEQGIISREDQEKIDAGLQDILADIESGLFKLEGDDEDIHMAIEGELTRRIGDAGKRLHTARSRNDQVALDFRLYVQRNTKTIAELLLKNIETFVKVAEENAETMLPGMTHLQHAQPINFGYHMMAYASMFKRDYERFMSSYERNNYSPIGCAALAGTPHPINRQTTSDKLGFNAPTLNCLDTVSDRDFALEILFNISTVMMHMSRLSEELILWSAAEFKWVTLSDRHATGSSIMPQKKNPDIPELLRGKTGRVNGNLVALLTVMKSLPLAYNKDMQEDKEGVFDSVRTAILSLQVLEEMIADMTVNKEAMERACMVGHLSATDLADYLVKEQGLPFRDAYHITGNVVNLAEEKGLDISELSLEDLQSIDERIAEDVVALLDNRASMNARQSEGGTATVRTLEQIEDLKKWLEKQDEK.

It belongs to the lyase 1 family. Argininosuccinate lyase subfamily.

The protein resides in the cytoplasm. It carries out the reaction 2-(N(omega)-L-arginino)succinate = fumarate + L-arginine. It functions in the pathway amino-acid biosynthesis; L-arginine biosynthesis; L-arginine from L-ornithine and carbamoyl phosphate: step 3/3. The sequence is that of Argininosuccinate lyase from Sulfurovum sp. (strain NBC37-1).